We begin with the raw amino-acid sequence, 1203 residues long: Partitioning defective 3 homolog B (1203 aa).

Disordered regions lie at residues 79-104 (FDEQEPLQKTESPGGNPADRQSPDAF) and 138-162 (RRSSDPAPGPHADAQPSTASLSGQS). The residue at position 100 (Ser-100) is a Phosphoserine. Residues 152–162 (QPSTASLSGQS) are compositionally biased toward polar residues. Positions 201–289 (TRAVEISGEG…SPSVILHVLL (89 aa)) constitute a PDZ 1 domain. A disordered region spans residues 334 to 374 (TRASSPEGEEPASPQQSKSPRVPRLGRKPSSPSLSPLMGFG). Phosphoserine occurs at positions 346, 352, and 368. PDZ domains follow at residues 383 to 468 (KIDL…VIAR) and 496 to 585 (TLEI…GMIQ). Phosphoserine occurs at positions 635, 710, 728, 730, 746, 749, and 801. Residues 718 to 732 (GKVQSLADRRSDSPG) are compositionally biased toward basic and acidic residues. Residues 718-743 (GKVQSLADRRSDSPGKDFGPTLGLKK) form a disordered region. 3 disordered regions span residues 787-927 (KSYD…EKQA), 968-994 (VFRSPSPLRAGPLAYPRDGRPLSPDHL), and 1050-1203 (RPSD…TAAV). A Phosphothreonine modification is found at Thr-810. Residues 827 to 842 (VENKAKNIKKTKEKEK) show a composition bias toward basic and acidic residues. A compositionally biased stretch (basic residues) spans 843-854 (KKGKGKLKVKEK). Composition is skewed to basic and acidic residues over residues 855–865 (KLKEEHEDAER), 881–893 (KKDDKVGKAEQKG), 906–927 (ERMKEERERIGAKHQELREKQA), and 984–994 (RDGRPLSPDHL). A phosphoserine mark is found at Ser-1088 and Ser-1182.

This sequence belongs to the PAR3 family. Interacts with PARD6B. Interacts with INSC/inscuteable.

It localises to the endomembrane system. The protein resides in the cell junction. The protein localises to the tight junction. Functionally, putative adapter protein involved in asymmetrical cell division and cell polarization processes. May play a role in the formation of epithelial tight junctions. In Mus musculus (Mouse), this protein is Partitioning defective 3 homolog B (Pard3b).